Reading from the N-terminus, the 158-residue chain is Ribosome maturation factor RimP (158 aa).

It belongs to the RimP family.

The protein resides in the cytoplasm. In terms of biological role, required for maturation of 30S ribosomal subunits. The chain is Ribosome maturation factor RimP from Pseudomonas fluorescens (strain SBW25).